A 262-amino-acid polypeptide reads, in one-letter code: tRNA pseudouridine synthase A (262 aa).

The Nucleophile role is filled by Asp-51. Position 109 (Tyr-109) interacts with substrate.

This sequence belongs to the tRNA pseudouridine synthase TruA family. Homodimer.

The catalysed reaction is uridine(38/39/40) in tRNA = pseudouridine(38/39/40) in tRNA. Formation of pseudouridine at positions 38, 39 and 40 in the anticodon stem and loop of transfer RNAs. This chain is tRNA pseudouridine synthase A, found in Aliivibrio salmonicida (strain LFI1238) (Vibrio salmonicida (strain LFI1238)).